The sequence spans 226 residues: Lipoprotein-releasing system ATP-binding protein LolD (226 aa).

One can recognise an ABC transporter domain in the interval L5–Y226. Position 41–48 (G41–S48) interacts with ATP.

The protein belongs to the ABC transporter superfamily. Lipoprotein translocase (TC 3.A.1.125) family. The complex is composed of two ATP-binding proteins (LolD) and two transmembrane proteins (LolC and LolE).

Its subcellular location is the cell inner membrane. Its function is as follows. Part of the ABC transporter complex LolCDE involved in the translocation of mature outer membrane-directed lipoproteins, from the inner membrane to the periplasmic chaperone, LolA. Responsible for the formation of the LolA-lipoprotein complex in an ATP-dependent manner. The sequence is that of Lipoprotein-releasing system ATP-binding protein LolD from Psychrobacter cryohalolentis (strain ATCC BAA-1226 / DSM 17306 / VKM B-2378 / K5).